The primary structure comprises 403 residues: Tyrosine--tRNA ligase (403 aa).

The 'HIGH' region motif lies at 45–54; that stretch reads PTAPDLHLGH. The 'KMSKS' region motif lies at 229 to 233; it reads KMSKS. Lysine 232 lines the ATP pocket. The S4 RNA-binding domain occupies 341-402; that stretch reads VLLGRLLAEA…GKRRFARIVF (62 aa).

Belongs to the class-I aminoacyl-tRNA synthetase family. TyrS type 2 subfamily. In terms of assembly, homodimer.

It localises to the cytoplasm. It catalyses the reaction tRNA(Tyr) + L-tyrosine + ATP = L-tyrosyl-tRNA(Tyr) + AMP + diphosphate + H(+). In terms of biological role, catalyzes the attachment of tyrosine to tRNA(Tyr) in a two-step reaction: tyrosine is first activated by ATP to form Tyr-AMP and then transferred to the acceptor end of tRNA(Tyr). The chain is Tyrosine--tRNA ligase from Geobacter metallireducens (strain ATCC 53774 / DSM 7210 / GS-15).